We begin with the raw amino-acid sequence, 187 residues long: UPF0302 protein SERP1032 (187 aa).

This sequence belongs to the UPF0302 family.

This Staphylococcus epidermidis (strain ATCC 35984 / DSM 28319 / BCRC 17069 / CCUG 31568 / BM 3577 / RP62A) protein is UPF0302 protein SERP1032.